The chain runs to 83 residues: Homeobox protein DLX-2 (83 aa).

The span at 1 to 14 (STATDSSYYTNQQH) shows a compositional bias: polar residues. Disordered regions lie at residues 1–27 (STAT…SPYA) and 63–83 (PYGT…LEPE).

This sequence belongs to the distal-less homeobox family. In terms of assembly, interacts (via homeobox DNA-binding domain) with POU4F2; this interaction enhances retinal ganglion cell (RGC) differentiation.

The protein resides in the nucleus. Acts as a transcriptional activator. Activates transcription of CGA/alpha-GSU, via binding to the downstream activin regulatory element (DARE) in the gene promoter. Plays a role in terminal differentiation of interneurons, such as amacrine and bipolar cells in the developing retina. Likely to play a regulatory role in the development of the ventral forebrain. May play a role in craniofacial patterning and morphogenesis. The polypeptide is Homeobox protein DLX-2 (Dlx2) (Rattus norvegicus (Rat)).